A 220-amino-acid chain; its full sequence is MPLSHTTWAPAVKAKLNPEYLKQVAQFIQSTYREDAHIFPQQKNIFAALEKTPLPETKVVIMGQDPYHNIGQAQGLSFSVPENVPAPPSLQNILKELSTDVGPRQSHDLTSWSTQGVLLLNAVLTVPEGQANAHQGKIWEPLTDSLIQIASEDDAPKVFILWGKFAQSKRQFIDESKHLVLMSAHPSPLSAYRGFFGSQPFSKANHFLVAKGRQPIDWLK.

Residue Asp65 is the Proton acceptor of the active site.

Belongs to the uracil-DNA glycosylase (UDG) superfamily. UNG family.

The protein localises to the cytoplasm. It catalyses the reaction Hydrolyzes single-stranded DNA or mismatched double-stranded DNA and polynucleotides, releasing free uracil.. Its function is as follows. Excises uracil residues from the DNA which can arise as a result of misincorporation of dUMP residues by DNA polymerase or due to deamination of cytosine. This Leuconostoc mesenteroides subsp. mesenteroides (strain ATCC 8293 / DSM 20343 / BCRC 11652 / CCM 1803 / JCM 6124 / NCDO 523 / NBRC 100496 / NCIMB 8023 / NCTC 12954 / NRRL B-1118 / 37Y) protein is Uracil-DNA glycosylase.